We begin with the raw amino-acid sequence, 243 residues long: MGQKVNPISNRLGIIRGWDSNWYGGNDYGDALLEDSKIRKYLNARLAKASVSRIVIERTLKLVTITVCTARPGIIIGKGGQEVDKLKEELKKITDKDIQINIFEVKRPELDAVIVANNIARQVEGKIAYRRAIKMAIANTMRMGAEGIKVLISGRLNGAEMARSEMYKEGRTPLHTFRADIDYCHAEALTKVGLLGIKVWICRGEVYGKRELAPNFTQTKESGRGGNGNNNGGKNFKRKKNNR.

Residues 38-106 (IRKYLNARLA…DIQINIFEVK (69 aa)) enclose the KH type-2 domain. The disordered stretch occupies residues 217–243 (TQTKESGRGGNGNNNGGKNFKRKKNNR).

It belongs to the universal ribosomal protein uS3 family. In terms of assembly, part of the 30S ribosomal subunit. Forms a tight complex with proteins S10 and S14.

Binds the lower part of the 30S subunit head. Binds mRNA in the 70S ribosome, positioning it for translation. This Phocaeicola vulgatus (strain ATCC 8482 / DSM 1447 / JCM 5826 / CCUG 4940 / NBRC 14291 / NCTC 11154) (Bacteroides vulgatus) protein is Small ribosomal subunit protein uS3.